Consider the following 218-residue polypeptide: Adenylate kinase (218 aa).

10–15 serves as a coordination point for ATP; that stretch reads GAGKGT. Residues 30-59 form an NMP region; that stretch reads STGDMLRAAVKAGTPLGLEAKAIMDAGGLV. Residues threonine 31, arginine 36, 57–59, 85–88, and glutamine 92 each bind AMP; these read GLV and GFPR. Residues 122 to 159 are LID; sequence GRRVHLASGRTYHVTFNPPKAAGKDDVTGEDLVQRDDD. ATP is bound by residues arginine 123 and 132-133; that span reads TY. Arginine 156 and arginine 167 together coordinate AMP. Arginine 203 serves as a coordination point for ATP.

It belongs to the adenylate kinase family. In terms of assembly, monomer.

The protein resides in the cytoplasm. The enzyme catalyses AMP + ATP = 2 ADP. It functions in the pathway purine metabolism; AMP biosynthesis via salvage pathway; AMP from ADP: step 1/1. Functionally, catalyzes the reversible transfer of the terminal phosphate group between ATP and AMP. Plays an important role in cellular energy homeostasis and in adenine nucleotide metabolism. The sequence is that of Adenylate kinase from Chromobacterium violaceum (strain ATCC 12472 / DSM 30191 / JCM 1249 / CCUG 213 / NBRC 12614 / NCIMB 9131 / NCTC 9757 / MK).